The chain runs to 952 residues: Disintegrin and metalloproteinase domain-containing protein adm-2 (952 aa).

The Extracellular segment spans residues 1–672 (MTDTLDLKLS…NEAYRFRGIT (672 aa)). 2 N-linked (GlcNAc...) asparagine glycosylation sites follow: Asn125 and Asn301. A Peptidase M12B domain is found at 177–373 (RFVELALVAD…GIDLCLFNEP (197 aa)). 3 cysteine pairs are disulfide-bonded: Cys287-Cys368, Cys330-Cys352, and Cys332-Cys337. Residue His312 coordinates Zn(2+). The active site involves Glu313. His316 and His322 together coordinate Zn(2+). Residues 379 to 466 (DAKCGNGIVE…DCPADFFVQN (88 aa)) form the Disintegrin domain. N-linked (GlcNAc...) asparagine glycosylation is present at Asn406. Intrachain disulfides connect Cys438-Cys458, Cys624-Cys634, Cys628-Cys640, and Cys642-Cys651. The 33-residue stretch at 620-652 (VTAQCLDNCNFRGVCNNVGNCHCERGFGGIACE) folds into the EGF-like domain. A helical transmembrane segment spans residues 673-693 (LSSTFLVFFCLFGIFIGGLCV). Over 694–952 (YYRVKRKRNL…AAIFDQKLKK (259 aa)) the chain is Cytoplasmic. Disordered stretches follow at residues 778-809 (IPMV…ERAT) and 829-938 (SFNT…EKVD). 2 stretches are compositionally biased toward basic and acidic residues: residues 798–809 (AEKEEQNQERAT) and 849–873 (PSDD…DRLN). Over residues 905-914 (QAPPPPPPAH) the composition is skewed to pro residues. Residues 925-938 (KVSEDAAATEEKVD) show a composition bias toward basic and acidic residues.

Zn(2+) serves as cofactor. In terms of tissue distribution, expressed in hyp7 large epidermal syncytium (punctate distribution), seam cell syncytia, anterior epidermis, neurons located in the head, tail and central body, proximal oogenic cells (levels increasing in maturing oocytes) and myoepithelial cells of the spermatheca (at protein level). Not detected in mature sperm cells.

The protein resides in the cell membrane. Its subcellular location is the endosome membrane. It localises to the lysosome membrane. Functionally, metalloprotease that cleaves and releases a number of molecules. Negative regulator of lrp-1 protein levels, potentially by influencing its endosomal trafficking. Involved in regulating the molting process. This is Disintegrin and metalloproteinase domain-containing protein adm-2 from Caenorhabditis elegans.